Consider the following 340-residue polypeptide: Selenide, water dikinase (340 aa).

The active site involves Sec-17. Position 17 (Sec-17) is a non-standard amino acid, selenocysteine. ATP is bound by residues Lys-20 and 45 to 47 (NNE). Asp-48 contacts Mg(2+). Residues Asp-65, Asp-88, and 136–138 (GHT) each bind ATP. Residue Asp-88 participates in Mg(2+) binding. Asp-224 serves as a coordination point for Mg(2+).

It belongs to the selenophosphate synthase 1 family. Class I subfamily. In terms of assembly, homodimer. Mg(2+) serves as cofactor.

The enzyme catalyses hydrogenselenide + ATP + H2O = selenophosphate + AMP + phosphate + 2 H(+). Synthesizes selenophosphate from selenide and ATP. This Campylobacter jejuni subsp. jejuni serotype O:2 (strain ATCC 700819 / NCTC 11168) protein is Selenide, water dikinase.